The sequence spans 297 residues: PAK4-inhibitor INKA2 (297 aa).

3 disordered regions span residues 82–109 (GRGP…PSHR), 175–200 (LEKG…PQEL), and 234–285 (TPMV…LEHS). Residues 92-102 (SPSSQPSLGSS) show a composition bias toward low complexity. Residues 137–180 (EPDDWTSTLMSRGRNRQPLVLGDNVFADLVGNWLDLPELEKGGE) are inka box. The segment covering 244 to 253 (RSQKVKKRSL) has biased composition (basic residues).

It belongs to the INKA family. In terms of assembly, interacts with PAK4.

It localises to the nucleus. In terms of biological role, inhibitor of the serine/threonine-protein kinase PAK4. Acts by binding PAK4 in a substrate-like manner, inhibiting the protein kinase activity. The polypeptide is PAK4-inhibitor INKA2 (Homo sapiens (Human)).